Here is a 683-residue protein sequence, read N- to C-terminus: uncharacterized protein (683 aa).

3 coiled-coil regions span residues P62 to R124, T155 to Q259, and K346 to V376. Residues Q213–G237 form a disordered region.

This is an uncharacterized protein from Invertebrate iridescent virus 3 (IIV-3).